Here is a 32-residue protein sequence, read N- to C-terminus: Cytochrome b6-f complex subunit 8 (32 aa).

A helical transmembrane segment spans residues 6–26 (IVGITWAALMVVFTFSLSLVV).

This sequence belongs to the PetN family. The 4 large subunits of the cytochrome b6-f complex are cytochrome b6, subunit IV (17 kDa polypeptide, PetD), cytochrome f and the Rieske protein, while the 4 small subunits are PetG, PetL, PetM and PetN. The complex functions as a dimer.

The protein resides in the plastid. It is found in the chloroplast thylakoid membrane. Functionally, component of the cytochrome b6-f complex, which mediates electron transfer between photosystem II (PSII) and photosystem I (PSI), cyclic electron flow around PSI, and state transitions. This is Cytochrome b6-f complex subunit 8 from Pinus koraiensis (Korean pine).